The sequence spans 199 residues: NADH-quinone oxidoreductase subunit C (199 aa).

This sequence belongs to the complex I 30 kDa subunit family. In terms of assembly, NDH-1 is composed of 14 different subunits. Subunits NuoB, C, D, E, F, and G constitute the peripheral sector of the complex.

The protein resides in the cell membrane. The catalysed reaction is a quinone + NADH + 5 H(+)(in) = a quinol + NAD(+) + 4 H(+)(out). In terms of biological role, NDH-1 shuttles electrons from NADH, via FMN and iron-sulfur (Fe-S) centers, to quinones in the respiratory chain. The immediate electron acceptor for the enzyme in this species is believed to be ubiquinone. Couples the redox reaction to proton translocation (for every two electrons transferred, four hydrogen ions are translocated across the cytoplasmic membrane), and thus conserves the redox energy in a proton gradient. In Polynucleobacter asymbioticus (strain DSM 18221 / CIP 109841 / QLW-P1DMWA-1) (Polynucleobacter necessarius subsp. asymbioticus), this protein is NADH-quinone oxidoreductase subunit C.